A 251-amino-acid chain; its full sequence is ATP synthase subunit a (251 aa).

6 helical membrane-spanning segments follow: residues 30 to 50 (NSNE…VVAL), 86 to 106 (FFPF…LGLF), 116 to 136 (IAIT…VGFW), 145 to 165 (FFSP…IEIV), 195 to 215 (FMLM…IIPL), and 219 to 239 (IALT…FAIL).

The protein belongs to the ATPase A chain family. As to quaternary structure, F-type ATPases have 2 components, CF(1) - the catalytic core - and CF(0) - the membrane proton channel. CF(1) has five subunits: alpha(3), beta(3), gamma(1), delta(1), epsilon(1). CF(0) has three main subunits: a(1), b(2) and c(9-12). The alpha and beta chains form an alternating ring which encloses part of the gamma chain. CF(1) is attached to CF(0) by a central stalk formed by the gamma and epsilon chains, while a peripheral stalk is formed by the delta and b chains.

It is found in the cell inner membrane. Key component of the proton channel; it plays a direct role in the translocation of protons across the membrane. In Acidiphilium cryptum (strain JF-5), this protein is ATP synthase subunit a.